The chain runs to 533 residues: UDP-glucuronosyltransferase 1-2 (533 aa).

Residues 1–27 (MDTGLCVPLRGISGLLLLLCALPWAEG) form the signal peptide. N-linked (GlcNAc...) asparagine glycans are attached at residues Asn141, Asn295, and Asn433. Residues 491–511 (VIGFLLAIVLTVVFIVFKCCA) traverse the membrane as a helical segment.

The protein belongs to the UDP-glycosyltransferase family. As to expression, expressed in kidney.

Its subcellular location is the microsome. The protein localises to the endoplasmic reticulum membrane. It carries out the reaction glucuronate acceptor + UDP-alpha-D-glucuronate = acceptor beta-D-glucuronoside + UDP + H(+). In terms of biological role, UDPGT is of major importance in the conjugation and subsequent elimination of potentially toxic xenobiotics and endogenous compounds. The sequence is that of UDP-glucuronosyltransferase 1-2 (Ugt1a2) from Mus musculus (Mouse).